We begin with the raw amino-acid sequence, 1872 residues long: MPTVCLLPLLFFTIGGCLGSSRPFRTFVVTDTTLTHLAVHRVTGEVFVGAVNRVFKLAPNLTELRAHVTGPIEDNARCYPPPSMRVCSHRLVPVDNVNKLLLIDYAARRLVACGSIWQGICQFLRLDDLFKLGEPHHRKEHYLSGAQEPDSMAGVIVEQVQGPSKLFVGTAVDGKSEYFPTLSSRKLIDDEDSGDMFSLVYQDEFVSSQIKIPSDTLSLYPAFDIYYIYGFVSASFVYFLTLQLDTQQTLLDTAGEKFFTSKIVRMCAGDSEFYSYVEFPIGCSWRGVEYRLVQSAHLAKPGLLLAQALGVPADEDVLFTIFSQGQKNRANPPRQTILCLFTLSSINAHIRRRIQSCYRGEGTLALPWLLNKELPCINTPLQINGNFCGLVLNQPLGGLHVIEGLPLLADSTDGMASVAAYTYHQHSVVFIGTRSGNLKKVRVDGSQDAQLYETVSVVQGSPILRDLLFSPDHRHIYLLSEKQVSQLPVETCEQYLSCAACLGSGDPHCGWCVLQHRCCREGACPGASAPHGFAEELSKCIQVRVRPNNVSVTSSGVQLTVAMRNVPDLSVGVSCSFEEVTESEAILLPSGELRCPSPSLQELQTLTRGHGATHTVRLQLLSMETGVRFAGVDFVFYNCSALQSCMSCVGSPYPCHWCKYRHVCTSHPHECSFQEGRVHSPEGCPEILPQGDLLIPVGVMQPLTLRAKNLPQPQSGQKNYECVVRVQGRQHRVPAVRFNSSSVQCQNASYFYEGDEFGDTELDFSVVWDGDFPIDKPPSFRALLYKCWAQRPSCGLCLKADPRFNCGWCISEHRCQLRAHCPAPKSNWMHPSQKGARCSHPRITQIHPLTGPKEGGTRVTIVGENLGLTSREVGLRVAGVRCNSIPTEYVSAERIVCEMEESLVPSPPPGPAELCVGDCSADFRTQSQQLYSFVTPTFDRVSPSRGPASGGTRLTISGISLDAGSRVTVIIRDGECQFVRRDAEAIVCISPVSTLGPSQSPITLAIDHANISNTGVIYTYTQDPTVTHLEPTWSIINGSTSITVSGTHLLTVQEPRVRAKYRGIETTNTCQVINDTAMLCKAPGIFLGHPQPRAQGEHPDEFGFLLDHVQAARSLNRSSFTYYPDPSFEPLGPSGVLDVKPGSHVVLKGKNLIPAAAGSSRLNYTVLIGGQPCALTVSDTQLLCDSPSQTGRQPVMVLVGGLEFWLGTLHITADRALTLPAMVGLAAGGGLLLLAITVVLVAYKRKTQDADRTLKRLQLQMDNLESRVALECKEAFAELQTDINELTNHMDGVQIPFLDYRTYAVRVLFPGIEAHPVLKELDTPPNVEKALRLFGQLLHSRAFLLTFIHTLEAQSSFSMRDRGTVASLTMVALQSRLDYATGLLKQLLADLIEKNLESKNHPKLLLRRTESVAEKMLTNWFTFLLHKFLKECAGEPLFLLYCAIKQQMEKGPIDAITGEARYSLSEDKLIRQQIDYKTLTLHCVCPESEGSAQVPVKVLNCDSITQAKDKLLDTVYKGIPYSQRPKAEDMDLEWRQGRMARIILQDEDITTKIECDWKRVNSLAHYQVTDGSLVALVPKQVSAYNMANSFTFTRSLSRYESLLRAASSPDSLRSRAPMLTPDQEAGTKLWHLVRNHDHTDHREGDRGSKMVSEIYLTRLLATKGTLQKFVDDLFETVFSTAHRGSALPLAIKYMFDFLDEQADQRQISDPDVRHTWKSNCLPLRFWVNVIKNPQFVFDIHKNSITDACLSVVAQTFMDSCSTSEHRLGKDSPSNKLLYAKDIPNYKSWVERYYRDIAKMASISDQDMDAYLVEQSRLHANDFNVLSALSELYFYVTKYRQEILTSLDRDASCRKHKLRQKLEQIITLVSSSS.

A signal peptide spans 1–19 (MPTVCLLPLLFFTIGGCLG). The 470-residue stretch at 20 to 489 (SSRPFRTFVV…SEKQVSQLPV (470 aa)) folds into the Sema domain. Over 20–1220 (SSRPFRTFVV…ITADRALTLP (1201 aa)) the chain is Extracellular. Asparagine 60 carries an N-linked (GlcNAc...) asparagine glycan. Cystine bridges form between cysteine 78–cysteine 87, cysteine 113–cysteine 121, cysteine 267–cysteine 388, cysteine 283–cysteine 339, cysteine 357–cysteine 376, cysteine 492–cysteine 509, cysteine 498–cysteine 540, cysteine 501–cysteine 518, and cysteine 512–cysteine 524. An N-linked (GlcNAc...) asparagine glycan is attached at asparagine 549. A disulfide bridge links cysteine 575 with cysteine 595. IPT/TIG domains follow at residues 841-934 (PRIT…YSFV), 936-1021 (PTFD…YTYT), 1024-1123 (PTVT…FTYY), and 1126-1212 (PSFE…LHIT). Asparagine 1163 carries an N-linked (GlcNAc...) asparagine glycan. The chain crosses the membrane as a helical span at residues 1221 to 1241 (AMVGLAAGGGLLLLAITVVLV). Positions 1240-1294 (LVAYKRKTQDADRTLKRLQLQMDNLESRVALECKEAFAELQTDINELTNHMDGVQ) form a coiled coil. The Cytoplasmic portion of the chain corresponds to 1242-1872 (AYKRKTQDAD…QIITLVSSSS (631 aa)). Residue serine 1597 is modified to Phosphoserine.

The protein belongs to the plexin family. Detected in embryonic hindbrain, spinal cord, dorsal root ganglion, trigeminal ganglion and superior cervical ganglion. In newborns, detected throughout all layers of the hippocampus.

It localises to the cell membrane. In terms of biological role, coreceptor for SEMA3A and SEMA3F. Necessary for signaling by class 3 semaphorins and subsequent remodeling of the cytoskeleton. Plays a role in axon guidance in the developing nervous system. Regulates the migration of sympathetic neurons, but not of neural crest precursors. Required for normal dendrite spine morphology in pyramidal neurons. May play a role in regulating semaphorin-mediated programmed cell death in the developing nervous system. Class 3 semaphorins bind to a complex composed of a neuropilin and a plexin. The plexin modulates the affinity of the complex for specific semaphorins, and its cytoplasmic domain is required for the activation of down-stream signaling events in the cytoplasm. The protein is Plexin-A3 (Plxna3) of Mus musculus (Mouse).